A 250-amino-acid chain; its full sequence is AA9 family lytic polysaccharide monooxygenase B (250 aa).

The first 21 residues, 1-21, serve as a signal peptide directing secretion; it reads MTLSKITSIAGLLASASLVAG. Cu(2+)-binding residues include histidine 22 and histidine 107. Residue histidine 22 is modified to Methylhistidine. Intrachain disulfides connect cysteine 77–cysteine 199 and cysteine 118–cysteine 122. Residue asparagine 159 is glycosylated (N-linked (GlcNAc...) asparagine). O2 is bound by residues histidine 185 and glutamine 194. Tyrosine 196 is a binding site for Cu(2+).

The protein belongs to the polysaccharide monooxygenase AA9 family. It depends on Cu(2+) as a cofactor. In terms of processing, the catalytically essential N-terminal histidine His-22 is post-translationally modified by methylation to prevent protonation of the histidine side chain, and protect the critical active site of the enzyme from oxidative damage.

It localises to the secreted. The enzyme catalyses [(1-&gt;4)-beta-D-glucosyl]n+m + reduced acceptor + O2 = 4-dehydro-beta-D-glucosyl-[(1-&gt;4)-beta-D-glucosyl]n-1 + [(1-&gt;4)-beta-D-glucosyl]m + acceptor + H2O.. Its function is as follows. Lytic polysaccharide monooxygenase (LPMO) that depolymerizes crystalline and amorphous polysaccharides via the oxidation of scissile alpha- or beta-(1-4)-glycosidic bonds, yielding C1 and C4 oxidation products. Catalysis by LPMOs requires the reduction of the active-site copper from Cu(II) to Cu(I) by a reducing agent and H(2)O(2) or O(2) as a cosubstrate. Shows activity on phosphoric acid swollen cellulose, on NaOH pretreated soy spent flakes as well as on crystalline cellulose (Avicel). Does not have a positive effect on cel6A activity, but acts synergistically with endoglucanase egl7. The protein is AA9 family lytic polysaccharide monooxygenase B of Aspergillus fumigatus (strain ATCC MYA-4609 / CBS 101355 / FGSC A1100 / Af293) (Neosartorya fumigata).